The chain runs to 598 residues: Elongation factor 4 (598 aa).

The 183-residue stretch at 2-184 (KNIRNFSIIA…RLVKEIPAPE (183 aa)) folds into the tr-type G domain. GTP contacts are provided by residues 14-19 (DHGKST) and 131-134 (NKID).

The protein belongs to the TRAFAC class translation factor GTPase superfamily. Classic translation factor GTPase family. LepA subfamily.

Its subcellular location is the cell inner membrane. It catalyses the reaction GTP + H2O = GDP + phosphate + H(+). Required for accurate and efficient protein synthesis under certain stress conditions. May act as a fidelity factor of the translation reaction, by catalyzing a one-codon backward translocation of tRNAs on improperly translocated ribosomes. Back-translocation proceeds from a post-translocation (POST) complex to a pre-translocation (PRE) complex, thus giving elongation factor G a second chance to translocate the tRNAs correctly. Binds to ribosomes in a GTP-dependent manner. The chain is Elongation factor 4 from Proteus mirabilis (strain HI4320).